The chain runs to 172 residues: UPF0254 protein Mlab_1743 (172 aa).

It belongs to the UPF0254 family.

This is UPF0254 protein Mlab_1743 from Methanocorpusculum labreanum (strain ATCC 43576 / DSM 4855 / Z).